Here is a 247-residue protein sequence, read N- to C-terminus: Ribosomal RNA processing protein 36 homolog (247 aa).

Disordered stretches follow at residues 1–29 (MDNQ…HLKD), 62–89 (RTQG…QRVP), 136–188 (SVEK…RELV), and 218–247 (GKLQ…QVDQ). Positions 8–23 (SSDDESPTDDCSDEGE) are enriched in acidic residues. 2 stretches are compositionally biased toward basic and acidic residues: residues 136–153 (SVEK…RKNL) and 164–174 (ERSRKSAEAKR). Residues 218–240 (GKLQKYLTKRRKKTASKDRRHVP) show a composition bias toward basic residues.

This sequence belongs to the RRP36 family.

The protein resides in the nucleus. It is found in the nucleolus. Functionally, involved in the early processing steps of the pre-rRNA in the maturation pathway leading to the 18S rRNA. This chain is Ribosomal RNA processing protein 36 homolog, found in Nematostella vectensis (Starlet sea anemone).